The chain runs to 140 residues: Nucleoside diphosphate kinase (140 aa).

6 residues coordinate ATP: Lys-11, Phe-59, Arg-87, Thr-93, Arg-104, and Asn-114. The active-site Pros-phosphohistidine intermediate is His-117.

Belongs to the NDK family. Homotetramer. The cofactor is Mg(2+).

It localises to the cytoplasm. It catalyses the reaction a 2'-deoxyribonucleoside 5'-diphosphate + ATP = a 2'-deoxyribonucleoside 5'-triphosphate + ADP. The catalysed reaction is a ribonucleoside 5'-diphosphate + ATP = a ribonucleoside 5'-triphosphate + ADP. Major role in the synthesis of nucleoside triphosphates other than ATP. The ATP gamma phosphate is transferred to the NDP beta phosphate via a ping-pong mechanism, using a phosphorylated active-site intermediate. This Bradyrhizobium sp. (strain BTAi1 / ATCC BAA-1182) protein is Nucleoside diphosphate kinase.